The chain runs to 289 residues: Release factor glutamine methyltransferase (289 aa).

Residues 130-134, Asp153, Trp182, and Asn196 contribute to the S-adenosyl-L-methionine site; that span reads GTGTG. 196–199 lines the substrate pocket; it reads NPPY.

It belongs to the protein N5-glutamine methyltransferase family. PrmC subfamily.

It carries out the reaction L-glutaminyl-[peptide chain release factor] + S-adenosyl-L-methionine = N(5)-methyl-L-glutaminyl-[peptide chain release factor] + S-adenosyl-L-homocysteine + H(+). Methylates the class 1 translation termination release factors RF1/PrfA and RF2/PrfB on the glutamine residue of the universally conserved GGQ motif. This is Release factor glutamine methyltransferase from Agrobacterium fabrum (strain C58 / ATCC 33970) (Agrobacterium tumefaciens (strain C58)).